The primary structure comprises 396 residues: Dual specificity mitogen-activated protein kinase kinase dSOR1 (396 aa).

The segment at 25 to 44 (APTPPFKTPSGTDTHSLLGK) is disordered. The 278-residue stretch at 87-364 (LEKLGELGSG…LKTLLSHPWI (278 aa)) folds into the Protein kinase domain. ATP is bound by residues 93–101 (LGSGNGGVV) and K116. The active-site Proton acceptor is D209. Phosphoserine; by RAF is present on residues S237 and S241.

Belongs to the protein kinase superfamily. STE Ser/Thr protein kinase family. MAP kinase kinase subfamily. In terms of assembly, interacts with Raf and ksr; Dsor1 binding to ksr probably promotes ksr and Raf dimerization and ksr-mediated Raf transactivation. Phosphorylation on Ser/Thr by MAP kinase kinase kinases regulates positively the kinase activity.

The enzyme catalyses L-seryl-[protein] + ATP = O-phospho-L-seryl-[protein] + ADP + H(+). The catalysed reaction is L-threonyl-[protein] + ATP = O-phospho-L-threonyl-[protein] + ADP + H(+). It catalyses the reaction L-tyrosyl-[protein] + ATP = O-phospho-L-tyrosyl-[protein] + ADP + H(+). Its function is as follows. Required downstream of Raf in the sevenless (sev), torso (tor), and Drosophila EGF receptor homolog (DER) signal transduction pathways. Involved in both positive regulation (at the posterior terminus) and negative regulation (at the anterior domain) of tll, as in other terminal class gene products, maybe via the ERK-A kinase. In Drosophila melanogaster (Fruit fly), this protein is Dual specificity mitogen-activated protein kinase kinase dSOR1 (Dsor1).